Reading from the N-terminus, the 126-residue chain is MSALDTSIRVEVKTEYIEQQSSPEDEKYLFSYTITIINLGEQAAKLETRHWIITDANGNTSEVQGAGVVGETPTIAPNTAYQYTSGTVLDTPLGIMHGTYGMVSESGEHFQATIRPFRLTTPGLLH.

In terms of domain architecture, ApaG spans 2-126 (SALDTSIRVE…FRLTTPGLLH (125 aa)).

In Shewanella baltica (strain OS195), this protein is Protein ApaG.